A 318-amino-acid polypeptide reads, in one-letter code: Beta-galactosidase small subunit (318 aa).

It belongs to the bacterial beta-galactosidase small subunit family. Heterodimer of a large (LacL) and a small subunit (LacM).

It catalyses the reaction Hydrolysis of terminal non-reducing beta-D-galactose residues in beta-D-galactosides.. Functionally, component of a beta-galactosidase. This Lactobacillus helveticus (Lactobacillus suntoryeus) protein is Beta-galactosidase small subunit.